Reading from the N-terminus, the 263-residue chain is Endonuclease 8 (263 aa).

Proline 2 (schiff-base intermediate with DNA) is an active-site residue. Glutamate 3 acts as the Proton donor in catalysis. The active-site Proton donor; for beta-elimination activity is the lysine 53. DNA is bound by residues glutamine 70, arginine 125, and asparagine 169. The FPG-type zinc finger occupies 229-263; sequence KVFHRDGEPCERCGGIIEKTTLSSRPFYWCPGCQH. Residue arginine 253 is the Proton donor; for delta-elimination activity of the active site.

The protein belongs to the FPG family. Zn(2+) serves as cofactor.

The enzyme catalyses 2'-deoxyribonucleotide-(2'-deoxyribose 5'-phosphate)-2'-deoxyribonucleotide-DNA = a 3'-end 2'-deoxyribonucleotide-(2,3-dehydro-2,3-deoxyribose 5'-phosphate)-DNA + a 5'-end 5'-phospho-2'-deoxyribonucleoside-DNA + H(+). Functionally, involved in base excision repair of DNA damaged by oxidation or by mutagenic agents. Acts as a DNA glycosylase that recognizes and removes damaged bases. Has a preference for oxidized pyrimidines, such as thymine glycol, 5,6-dihydrouracil and 5,6-dihydrothymine. Has AP (apurinic/apyrimidinic) lyase activity and introduces nicks in the DNA strand. Cleaves the DNA backbone by beta-delta elimination to generate a single-strand break at the site of the removed base with both 3'- and 5'-phosphates. The sequence is that of Endonuclease 8 from Escherichia coli (strain UTI89 / UPEC).